Consider the following 430-residue polypeptide: tRNA(Ile)-lysidine synthase (430 aa).

21 to 26 (SGGLDS) is an ATP binding site.

Belongs to the tRNA(Ile)-lysidine synthase family.

Its subcellular location is the cytoplasm. It carries out the reaction cytidine(34) in tRNA(Ile2) + L-lysine + ATP = lysidine(34) in tRNA(Ile2) + AMP + diphosphate + H(+). Functionally, ligates lysine onto the cytidine present at position 34 of the AUA codon-specific tRNA(Ile) that contains the anticodon CAU, in an ATP-dependent manner. Cytidine is converted to lysidine, thus changing the amino acid specificity of the tRNA from methionine to isoleucine. The protein is tRNA(Ile)-lysidine synthase of Salmonella agona (strain SL483).